A 174-amino-acid polypeptide reads, in one-letter code: MASRVVEPLVVARVIGEVVDSFNPSVKLNVIYNGSKQVFNGHELMPAVIAAKPRVEIGGEDMRSAYTLIMTDPDVPGPSDPYLREHLHWIVTDIPGSTDSSFGREIVSYESPKPVIGIHRYVLLLYKQSGRQTVKPAATRDHFNTRRYTAENGLGSPVAAVYFNAQRETAARRR.

Belongs to the phosphatidylethanolamine-binding protein family. In terms of tissue distribution, expressed in vegetative axillary meristems but not in the main shoot meristem.

Its subcellular location is the cytoplasm. In terms of biological role, may form complexes with phosphorylated ligands by interfering with kinases and their effectors. This Nicotiana tabacum (Common tobacco) protein is CEN-like protein 1 (CET1).